The following is a 178-amino-acid chain: CDP-diacylglycerol--glycerol-3-phosphate 3-phosphatidyltransferase (178 aa).

The next 4 helical transmembrane spans lie at 5–25 (PNYL…LFYI), 32–52 (KLGA…GYIA), 61–81 (FGKM…TIML), and 145–165 (IIYL…LTII).

The protein belongs to the CDP-alcohol phosphatidyltransferase class-I family.

The protein resides in the cell membrane. The catalysed reaction is a CDP-1,2-diacyl-sn-glycerol + sn-glycerol 3-phosphate = a 1,2-diacyl-sn-glycero-3-phospho-(1'-sn-glycero-3'-phosphate) + CMP + H(+). It functions in the pathway phospholipid metabolism; phosphatidylglycerol biosynthesis; phosphatidylglycerol from CDP-diacylglycerol: step 1/2. Functionally, this protein catalyzes the committed step to the synthesis of the acidic phospholipids. The protein is CDP-diacylglycerol--glycerol-3-phosphate 3-phosphatidyltransferase (pgsA) of Rickettsia typhi (strain ATCC VR-144 / Wilmington).